Here is a 114-residue protein sequence, read N- to C-terminus: Tyrosine-protein phosphatase 27 (114 aa).

One can recognise a Tyrosine-protein phosphatase domain in the interval 1-114 (WQMIVEHKCC…ELGNDNPIVV (114 aa)). Residue aspartate 82 coordinates substrate.

This sequence belongs to the protein-tyrosine phosphatase family.

The enzyme catalyses O-phospho-L-tyrosyl-[protein] + H2O = L-tyrosyl-[protein] + phosphate. This is Tyrosine-protein phosphatase 27 (STY-27) from Styela plicata (Wrinkled sea squirt).